The chain runs to 174 residues: Large ribosomal subunit protein uL15 (174 aa).

Disordered regions lie at residues M1 to I57 and P147 to A174. A compositionally biased stretch (gly residues) spans R21–M35.

It belongs to the universal ribosomal protein uL15 family. Part of the 50S ribosomal subunit.

Functionally, binds to the 23S rRNA. The sequence is that of Large ribosomal subunit protein uL15 from Roseiflexus sp. (strain RS-1).